The following is a 3305-amino-acid chain: Apolipophorins (3305 aa).

The signal sequence occupies residues 1-23; the sequence is MGKSNRLLSVLFVISVLWKAAYG. The Vitellogenin domain maps to 39-640; the sequence is FAAGQKYNYG…SQTSFLPRSV (602 aa). N-linked (GlcNAc...) asparagine glycosylation is found at N643 and N2769. Residues 2733–2899 form the VWFD domain; the sequence is LRAVVVNGQH…NSYRLSRSCP (167 aa). C2757 and C2898 form a disulfide bridge.

In terms of processing, cleaved into 2 chains by furin protease. However, prevention of cleavage does not impair its function. Post-translationally, N-glycosylated.

It is found in the secreted. In terms of biological role, constitutes the major component of lipophorin, which mediates transport for various types of lipids in hemolymph. Acts by forming lipoprotein particles that bind lipoproteins and lipids. May be required for morphogens wingless (wg) and hedgehog (hh) function, possibly by acting as vehicles for the movement of wg and hh. The sequence is that of Apolipophorins from Manduca sexta (Tobacco hawkmoth).